An 87-amino-acid polypeptide reads, in one-letter code: Small ribosomal subunit protein uS17 (87 aa).

It belongs to the universal ribosomal protein uS17 family. Part of the 30S ribosomal subunit.

In terms of biological role, one of the primary rRNA binding proteins, it binds specifically to the 5'-end of 16S ribosomal RNA. The polypeptide is Small ribosomal subunit protein uS17 (Bacillus subtilis (strain 168)).